The following is a 241-amino-acid chain: Phosphoadenosine 5'-phosphosulfate reductase (241 aa).

Cys235 acts as the Nucleophile; cysteine thiosulfonate intermediate in catalysis.

The protein belongs to the PAPS reductase family. CysH subfamily.

It localises to the cytoplasm. It catalyses the reaction [thioredoxin]-disulfide + sulfite + adenosine 3',5'-bisphosphate + 2 H(+) = [thioredoxin]-dithiol + 3'-phosphoadenylyl sulfate. It functions in the pathway sulfur metabolism; hydrogen sulfide biosynthesis; sulfite from sulfate: step 3/3. In terms of biological role, catalyzes the formation of sulfite from phosphoadenosine 5'-phosphosulfate (PAPS) using thioredoxin as an electron donor. The sequence is that of Phosphoadenosine 5'-phosphosulfate reductase from Xanthomonas oryzae pv. oryzae (strain MAFF 311018).